The following is a 158-amino-acid chain: Regulator of G-protein signaling 13 (158 aa).

The 117-residue stretch at 34–150 (SLESLMATKY…LKSEMYQQLL (117 aa)) folds into the RGS domain.

Functionally, inhibits signal transduction by increasing the GTPase activity of G protein alpha subunits thereby driving them into their inactive GDP-bound form. Binds to both G(i)-alpha and G(q)-alpha. This Mus musculus (Mouse) protein is Regulator of G-protein signaling 13 (Rgs13).